A 1191-amino-acid chain; its full sequence is DNA-directed RNA polymerase subunit beta (1191 aa).

Basic and acidic residues predominate over residues 1171–1181 (RVKQEAEEKQA). The interval 1171–1191 (RVKQEAEEKQAEQVSEVVQED) is disordered. Positions 1182–1191 (EQVSEVVQED) are enriched in low complexity.

It belongs to the RNA polymerase beta chain family. The RNAP catalytic core consists of 2 alpha, 1 beta, 1 beta' and 1 omega subunit. When a sigma factor is associated with the core the holoenzyme is formed, which can initiate transcription.

The catalysed reaction is RNA(n) + a ribonucleoside 5'-triphosphate = RNA(n+1) + diphosphate. Its function is as follows. DNA-dependent RNA polymerase catalyzes the transcription of DNA into RNA using the four ribonucleoside triphosphates as substrates. The protein is DNA-directed RNA polymerase subunit beta of Streptococcus agalactiae serotype Ia (strain ATCC 27591 / A909 / CDC SS700).